Reading from the N-terminus, the 495-residue chain is MSEEMNDQMQVRRQKLQELIDLGIDPFGHRFNRSSTSSELKEQWDQFSKEELHEKEDESHVSIAGRLMTKRGKGKAGFAHIQDLKGQIQIYVRKDQVGDDQFNIWKMADLGDIIGVEGVMFKTNTGEISVKAKSFTLLSKSLRPLPDKFHGLQDIEQRYRQRYLDLITNEDSTQTFINRSKIIQEMRNYLNKQGFLEVETPMMHQIAGGAAARPFVTHHNALDATLYMRIAIELHLKRLIVGGLEKVYEIGRVFRNEGVSTRHNPEFTMIELYEAYADYHDIMDLTENMVRHIAQEVFGSAKVQYNDEEIDLESSWKRLHIVDAVKEVTGVDFYNVNSDEEAIRLAKEHDIEITENMKYGHILNEFFEQKVEETLIQPTFIYGHPIEISPLAKKNPNDERFTDRFELFIVGREHANAFTELNDPIDQRQRFEAQLVEKEQGNDEAHDMDEDYIEALEYGMPPTGGLGIGIDRLVMLLTDSPSIRDVLLFPYMRQK.

Residues glutamate 406 and glutamate 413 each coordinate Mg(2+).

This sequence belongs to the class-II aminoacyl-tRNA synthetase family. As to quaternary structure, homodimer. Mg(2+) is required as a cofactor.

It is found in the cytoplasm. The enzyme catalyses tRNA(Lys) + L-lysine + ATP = L-lysyl-tRNA(Lys) + AMP + diphosphate. This chain is Lysine--tRNA ligase, found in Staphylococcus epidermidis (strain ATCC 35984 / DSM 28319 / BCRC 17069 / CCUG 31568 / BM 3577 / RP62A).